The following is a 268-amino-acid chain: Helix-loop-helix protein 6 (268 aa).

Over residues 117–130 (QSQVQPQLPTQSQP) the composition is skewed to low complexity. The tract at residues 117–140 (QSQVQPQLPTQSQPKPSSKASLDT) is disordered. The span at 131–140 (KPSSKASLDT) shows a compositional bias: polar residues. Residues 173-225 (SSVWKRNERERCRVRNVNDGYERLRKHLPVHFDEKRISKVDTLRLAIRYIKHL) enclose the bHLH domain.

Expressed in the gland cells of the pharynx and weakly in the pharyngeal neuron.

Its subcellular location is the nucleus. Its function is as follows. Transcription factor that regulates the development of the g2 pharyngeal gland cells and pharyngeal gland function and thereby is required for feeding. Required for the expression of a number of genes in the pharyngeal gland, possibly by binding to the E box motif (5'-CANNTG-3') in the promoter region of these genes. Positively regulates the expression of genes encoding mucin-like proteins, which lubricate the pharyngeal tract to ensure efficient passage of the bacterial food source. Exhibits pharyngeal gland-specific positive autoregulation activity. The sequence is that of Helix-loop-helix protein 6 (hlh-6) from Caenorhabditis elegans.